We begin with the raw amino-acid sequence, 463 residues long: Glycine--tRNA ligase (463 aa).

2 residues coordinate substrate: Arg-98 and Glu-174. Residues 206-208 (RNE), 216-221 (FRTREF), 290-291 (EL), and 334-337 (GADR) contribute to the ATP site. Position 221-225 (221-225 (FEQME)) interacts with substrate. Substrate is bound at residue 330–334 (EPSLG).

It belongs to the class-II aminoacyl-tRNA synthetase family. As to quaternary structure, homodimer.

The protein localises to the cytoplasm. It carries out the reaction tRNA(Gly) + glycine + ATP = glycyl-tRNA(Gly) + AMP + diphosphate. Its function is as follows. Catalyzes the attachment of glycine to tRNA(Gly). The sequence is that of Glycine--tRNA ligase from Staphylococcus haemolyticus (strain JCSC1435).